Consider the following 443-residue polypeptide: Signal recognition particle 54 kDa protein (443 aa).

Residues 104 to 111, 184 to 188, and 242 to 245 contribute to the GTP site; these read GLQGSGKT, DTAGR, and TKLD.

It belongs to the GTP-binding SRP family. SRP54 subfamily. In terms of assembly, part of the signal recognition particle protein translocation system, which is composed of SRP and FtsY. Archaeal SRP consists of a 7S RNA molecule of 300 nucleotides and two protein subunits: SRP54 and SRP19.

It is found in the cytoplasm. It carries out the reaction GTP + H2O = GDP + phosphate + H(+). Involved in targeting and insertion of nascent membrane proteins into the cytoplasmic membrane. Binds to the hydrophobic signal sequence of the ribosome-nascent chain (RNC) as it emerges from the ribosomes. The SRP-RNC complex is then targeted to the cytoplasmic membrane where it interacts with the SRP receptor FtsY. This is Signal recognition particle 54 kDa protein from Methanosarcina mazei (strain ATCC BAA-159 / DSM 3647 / Goe1 / Go1 / JCM 11833 / OCM 88) (Methanosarcina frisia).